The sequence spans 128 residues: S-adenosylmethionine decarboxylase proenzyme (128 aa).

Ser-61 (schiff-base intermediate with substrate; via pyruvic acid) is an active-site residue. Ser-61 bears the Pyruvic acid (Ser); by autocatalysis mark. The active-site Proton acceptor; for processing activity is the His-66. Cys-81 (proton donor; for catalytic activity) is an active-site residue.

This sequence belongs to the prokaryotic AdoMetDC family. Type 1 subfamily. As to quaternary structure, heterotetramer of two alpha and two beta chains arranged as a dimer of alpha/beta heterodimers. Pyruvate serves as cofactor. Is synthesized initially as an inactive proenzyme. Formation of the active enzyme involves a self-maturation process in which the active site pyruvoyl group is generated from an internal serine residue via an autocatalytic post-translational modification. Two non-identical subunits are generated from the proenzyme in this reaction, and the pyruvate is formed at the N-terminus of the alpha chain, which is derived from the carboxyl end of the proenzyme. The post-translation cleavage follows an unusual pathway, termed non-hydrolytic serinolysis, in which the side chain hydroxyl group of the serine supplies its oxygen atom to form the C-terminus of the beta chain, while the remainder of the serine residue undergoes an oxidative deamination to produce ammonia and the pyruvoyl group blocking the N-terminus of the alpha chain.

It catalyses the reaction S-adenosyl-L-methionine + H(+) = S-adenosyl 3-(methylsulfanyl)propylamine + CO2. Its pathway is amine and polyamine biosynthesis; S-adenosylmethioninamine biosynthesis; S-adenosylmethioninamine from S-adenosyl-L-methionine: step 1/1. In terms of biological role, catalyzes the decarboxylation of S-adenosylmethionine to S-adenosylmethioninamine (dcAdoMet), the propylamine donor required for the synthesis of the polyamines spermine and spermidine from the diamine putrescine. The sequence is that of S-adenosylmethionine decarboxylase proenzyme from Parasynechococcus marenigrum (strain WH8102).